A 171-amino-acid chain; its full sequence is Small ribosomal subunit protein uS5 (171 aa).

Residues 13–76 (FLERLVAVNR…DQAKKNLVTI (64 aa)) form the S5 DRBM domain.

This sequence belongs to the universal ribosomal protein uS5 family. Part of the 30S ribosomal subunit. Contacts proteins S4 and S8.

Functionally, with S4 and S12 plays an important role in translational accuracy. Its function is as follows. Located at the back of the 30S subunit body where it stabilizes the conformation of the head with respect to the body. In Dichelobacter nodosus (strain VCS1703A), this protein is Small ribosomal subunit protein uS5.